The primary structure comprises 195 residues: CASP-like protein 1E2 (195 aa).

Over 1-29 (MEVESKTSFGGMESKSKEVKVVTGGKLRP) the chain is Cytoplasmic. A helical transmembrane segment spans residues 30–50 (FDLVLRVVALALTLVAAVLLG). The Extracellular segment spans residues 51–82 (VDKQTKVVSLQLLPTLPPMDVPVTAKWRYLSA). The helical transmembrane segment at 83 to 103 (FVYFVVSNAIACSYAALSLLL) threads the bilayer. Topologically, residues 104–122 (SVGNSKGNKGLGLAITVMD) are cytoplasmic. Residues 123 to 143 (LVMVALLFSSNGAAGAIGLMG) traverse the membrane as a helical segment. Over 144-165 (YEGNSRVRWGKVCNVFGKFCNQ) the chain is Extracellular. The chain crosses the membrane as a helical span at residues 166 to 186 (VAVALGLSFFGGLAFFLLVVM). Residues 187 to 195 (AAFALNKRH) lie on the Cytoplasmic side of the membrane.

The protein belongs to the Casparian strip membrane proteins (CASP) family. As to quaternary structure, homodimer and heterodimers.

It is found in the cell membrane. The sequence is that of CASP-like protein 1E2 from Vitis vinifera (Grape).